Reading from the N-terminus, the 509-residue chain is Mitogen-activated protein kinase sma-5 (509 aa).

Residues D19–S72 form a disordered region. Polar residues-rich tracts occupy residues P20 to N30 and N40 to S54. Residues Y105–I411 form the Protein kinase domain. Residues I111 to V119 and K134 contribute to the ATP site. The active-site Proton acceptor is the D231. Residues Y460 to E482 are disordered. The segment covering G466–G481 has biased composition (low complexity).

This sequence belongs to the protein kinase superfamily. CMGC Ser/Thr protein kinase family. MAP kinase subfamily. The cofactor is Mg(2+). As to expression, expressed in intestine with a stronger expression in the four most anterior cells, muscles, excretory cell, pharynx and, to a lesser extent, in hypodermis.

It carries out the reaction L-seryl-[protein] + ATP = O-phospho-L-seryl-[protein] + ADP + H(+). The enzyme catalyses L-threonyl-[protein] + ATP = O-phospho-L-threonyl-[protein] + ADP + H(+). Its function is as follows. Serine/threonine-protein kinase involved in the postembryonic regulation of body size, mainly through control of cell growth. In particular, controls the volume of intestine, muscles and hypodermis. In addition, regulates growth, intestinal granule distribution, lifespan and number of offspring. The protein is Mitogen-activated protein kinase sma-5 of Caenorhabditis elegans.